Here is a 311-residue protein sequence, read N- to C-terminus: Glutaminase (311 aa).

Substrate contacts are provided by serine 66, asparagine 116, glutamate 162, asparagine 169, tyrosine 193, tyrosine 245, and valine 263.

Belongs to the glutaminase family. As to quaternary structure, homotetramer.

The catalysed reaction is L-glutamine + H2O = L-glutamate + NH4(+). This chain is Glutaminase, found in Rhodopseudomonas palustris (strain BisB5).